A 276-amino-acid chain; its full sequence is Large ribosomal subunit protein uL2 (276 aa).

Residues 219-268 form a disordered region; it reads TVRGSVMNPNDHPHGGGEGRQPVGRKSPMTPWGKPALGLKTRNKKAKSSK.

The protein belongs to the universal ribosomal protein uL2 family. As to quaternary structure, part of the 50S ribosomal subunit. Forms a bridge to the 30S subunit in the 70S ribosome.

Its function is as follows. One of the primary rRNA binding proteins. Required for association of the 30S and 50S subunits to form the 70S ribosome, for tRNA binding and peptide bond formation. It has been suggested to have peptidyltransferase activity; this is somewhat controversial. Makes several contacts with the 16S rRNA in the 70S ribosome. In Lactococcus lactis subsp. cremoris (strain MG1363), this protein is Large ribosomal subunit protein uL2.